The primary structure comprises 468 residues: Probable Xaa-Pro aminopeptidase PEPP (468 aa).

Mn(2+) contacts are provided by D264, D275, E398, and E438.

It belongs to the peptidase M24B family. The cofactor is Mn(2+).

The catalysed reaction is Release of any N-terminal amino acid, including proline, that is linked to proline, even from a dipeptide or tripeptide.. Its function is as follows. Catalyzes the removal of a penultimate prolyl residue from the N-termini of peptides. In Paracoccidioides brasiliensis (strain Pb03), this protein is Probable Xaa-Pro aminopeptidase PEPP (PEPP).